The following is a 666-amino-acid chain: Probable potassium transport system protein Kup (666 aa).

The next 12 helical transmembrane spans lie at 16-36, 58-78, 100-120, 141-161, 165-185, 221-241, 253-273, 294-314, 343-363, 373-393, 399-419, and 424-444; these read GFIIALGIVYGDIGTSPLYTM, ISLIIWTLTLITTIKYVLIAL, PWLIIPAMIGGATLLSDGALT, IYQNQTNIIITTLVILIVLFG, FGTGFIGKIFGPVMFIWFSFL, IFILGSIFLATTGAEALYSDL, WPFVKMCIVWSYCGQAAWILA, VYLVSLATLAAIIASQALISG, LYIPVINWILFAVTSCTVLAF, YGLAITITMLMTTILLKYYLI, PILAHLAMAFFALVEFIFFLA, and FMHGGYAVVILALAIVFVMFI.

The protein belongs to the HAK/KUP transporter (TC 2.A.72) family.

Its subcellular location is the cell membrane. It carries out the reaction K(+)(in) + H(+)(in) = K(+)(out) + H(+)(out). Its function is as follows. Transport of potassium into the cell. Likely operates as a K(+):H(+) symporter. In Streptococcus pyogenes serotype M4 (strain MGAS10750), this protein is Probable potassium transport system protein Kup.